The primary structure comprises 240 residues: MEAENIRADAFEPAKRATKRGASGGGQQDVEMQVDEATGIEGQVLGSSRASAPPKAKRARSELRKVSVPPHRYSSLKEHWMKIFTPVVEHMKLQIRFNMKARQVELRVGPETPDIANLQRGADFVRAFLCGFEVDDALALLRLEDLFVESFEIKDVKTLRGDHQSRAIGRLAGKGGRTKFTIENVTKTRIVLADSKIHILGSYQNIQLARRAVCNLILGSPPSKVYGNLRAVASRLSERM.

Residues 1–15 (MEAENIRADAFEPAK) are compositionally biased toward basic and acidic residues. The disordered stretch occupies residues 1 to 61 (MEAENIRADA…APPKAKRARS (61 aa)). One can recognise a KH domain in the interval 164 to 213 (QSRAIGRLAGKGGRTKFTIENVTKTRIVLADSKIHILGSYQNIQLARRAV).

It belongs to the PNO1 family.

The protein localises to the nucleus. It is found in the nucleolus. The polypeptide is RNA-binding protein pno1 (l(1)G0004) (Drosophila melanogaster (Fruit fly)).